A 539-amino-acid polypeptide reads, in one-letter code: AT-rich interactive domain-containing protein 3A (539 aa).

The segment at 1-190 is disordered; sequence MKLQAVMETL…PLSGHPQLQD (190 aa). Low complexity predominate over residues 55-73; sequence LKIQRAQAAALAAMRAAAA. Residues 84–100 are compositionally biased toward acidic residues; it reads SEEEDGESMASDEEDEK. The segment covering 101 to 110 has biased composition (basic and acidic residues); the sequence is ERDGESERYQ. The span at 113 to 141 shows a compositional bias: acidic residues; that stretch reads ASEEEDLKGKWDEDDFEDEGEDEYEDMEE. Polar residues predominate over residues 161 to 173; the sequence is HSSQQAFPSQRSQ. The ARID domain maps to 209 to 301; that stretch reads DPKRKEFLDD…YLYPYECEKR (93 aa). An REKLES domain is found at 404–499; sequence AALEQLREKL…GVLFAQPPTS (96 aa). The tract at residues 405-448 is important for nuclear localization; sequence ALEQLREKLESGEPPEKKMALGSEEQQRIIQRTIQHNLLAMTAQ. The interval 450–471 is homodimerization; sequence PMNIRINSQAEGRQDSAVNLTT. Residues 495 to 502 are important for cytoplasmic localization; sequence QPPTSASG. Residues 497–512 show a composition bias toward polar residues; it reads PTSASGTSKGSSNRTG. Residues 497-539 are disordered; it reads PTSASGTSKGSSNRTGSIGGGSSNSQAAPPSTPSAPNSNNPSP. Over residues 519–539 the composition is skewed to low complexity; that stretch reads SNSQAAPPSTPSAPNSNNPSP.

Homodimer.

Its subcellular location is the nucleus. The protein resides in the cytoplasm. Its function is as follows. Transcription factor required for smad1 and smad2-mediated responses to TGFbeta during mesoderm induction. The protein is AT-rich interactive domain-containing protein 3A (arid3a) of Xenopus laevis (African clawed frog).